We begin with the raw amino-acid sequence, 268 residues long: Undecaprenyl-diphosphatase (268 aa).

A run of 7 helical transmembrane segments spans residues 7 to 27 (IFNA…PISS), 87 to 107 (LIYH…LCIY), 116 to 136 (FYSI…TEIS), 146 to 166 (IETP…WPGF), 187 to 207 (VEFS…LDVI), 210 to 230 (FYDI…SAFI), and 247 to 267 (SLIP…LFFM).

It belongs to the UppP family.

The protein localises to the cell membrane. It carries out the reaction di-trans,octa-cis-undecaprenyl diphosphate + H2O = di-trans,octa-cis-undecaprenyl phosphate + phosphate + H(+). Its function is as follows. Catalyzes the dephosphorylation of undecaprenyl diphosphate (UPP). Confers resistance to bacitracin. In Buchnera aphidicola subsp. Baizongia pistaciae (strain Bp), this protein is Undecaprenyl-diphosphatase.